We begin with the raw amino-acid sequence, 442 residues long: Probable serine/threonine-protein kinase PBL17 (442 aa).

Gly-2 carries the N-myristoyl glycine lipid modification. Residue Cys-4 is the site of S-palmitoyl cysteine attachment. Thr-79 bears the Phosphothreonine mark. The 281-residue stretch at 90–370 (FRPDYILGEG…NHVVEVLETL (281 aa)) folds into the Protein kinase domain. Residues 96–104 (LGEGGFGVV) and Lys-125 contribute to the ATP site. Phosphotyrosine is present on Tyr-170. Asp-220 acts as the Proton acceptor in catalysis. Ser-254 carries the phosphoserine modification. Phosphothreonine is present on residues Thr-255 and Thr-260. Tyr-268 carries the post-translational modification Phosphotyrosine. A disordered region spans residues 385–442 (HSRGKSVTLYEASSDSQGTRDGNGQRRRRPESGRSKSEAAVDTEKYVSTLSEPDTTKI). The segment covering 395-406 (EASSDSQGTRDG) has biased composition (polar residues). Residues 414–429 (PESGRSKSEAAVDTEK) are compositionally biased toward basic and acidic residues. The span at 430 to 442 (YVSTLSEPDTTKI) shows a compositional bias: polar residues.

This sequence belongs to the protein kinase superfamily. Ser/Thr protein kinase family.

It is found in the cell membrane. The catalysed reaction is L-seryl-[protein] + ATP = O-phospho-L-seryl-[protein] + ADP + H(+). The enzyme catalyses L-threonyl-[protein] + ATP = O-phospho-L-threonyl-[protein] + ADP + H(+). May be involved in plant defense signaling. This Arabidopsis thaliana (Mouse-ear cress) protein is Probable serine/threonine-protein kinase PBL17.